Here is an 831-residue protein sequence, read N- to C-terminus: V-type proton ATPase subunit a (831 aa).

The Cytoplasmic segment spans residues 1–418; the sequence is MSPSLFRSEE…DSYGIATYRE (418 aa). A helical membrane pass occupies residues 419 to 437; that stretch reads VNHGIVAIVTFPFLFAIMF. At 438–439 the chain is on the vacuolar side; the sequence is GD. Residues 440 to 456 form a helical membrane-spanning segment; that stretch reads LGHGAIMASVALMFVLY. Residues 457 to 471 are Cytoplasmic-facing; that stretch reads EKTLGAKKDLDEIVG. Residues 472-501 traverse the membrane as a helical segment; it reads MVFYGRYIVLLMGLFSMYVGFVYNDLFSKP. The Vacuolar segment spans residues 502–548; the sequence is MSIFSSRWVWPVKSEEAIARAVQVGTYPIGIDPTWHSADNNLLFMNS. Residues 549–568 traverse the membrane as a helical segment; that stretch reads YKMKLSIILGVIHMTFCLFL. The Cytoplasmic segment spans residues 569–586; sequence SLSNYRFFKRKLDIYAVF. A helical membrane pass occupies residues 587-607; that stretch reads VPSLIFLEAIFGYLVITIVYK. Residues 608–650 lie on the Vacuolar side of the membrane; the sequence is WCIDWKAKDLQPPSLLNMLILMFLSPGTLEDQLYPGQKYLQVG. The helical transmembrane segment at 651 to 670 threads the bilayer; that stretch reads LVIAALICVPWLLIVKPFVL. The Cytoplasmic segment spans residues 671–723; that stretch reads WRRHSNEENKYQSLNSDLPNVDEADALMAVDSQEKQAEPFELGEVVIHQVIHT. The chain crosses the membrane as a helical span at residues 724 to 748; the sequence is IEFCLGCVSHTASYLRLWALSLAHN. The Vacuolar portion of the chain corresponds to 749–769; the sequence is QLSSVLWNMTLANGFRMTGIV. The chain crosses the membrane as a helical span at residues 770 to 808; the sequence is GSIFVVILFGFWFIATCVVLVAMEGTSAMLHSLRLHWVE. The Cytoplasmic portion of the chain corresponds to 809–831; the sequence is GMSKHFEGEGYAFTPFTFKVTAE.

The protein belongs to the V-ATPase 116 kDa subunit family. V-ATPase is a heteromultimeric enzyme composed of a peripheral catalytic V1 complex (components A to H) attached to an integral membrane V0 proton pore complex (components: a, c, c', c'', d, e, f and VOA1).

The protein localises to the vacuole membrane. Its function is as follows. Subunit of the V0 complex of vacuolar(H+)-ATPase (V-ATPase), a multisubunit enzyme composed of a peripheral complex (V1) that hydrolyzes ATP and a membrane integral complex (V0) that translocates protons. V-ATPase is responsible for acidifying and maintaining the pH of intracellular compartments. This Schizosaccharomyces pombe (strain 972 / ATCC 24843) (Fission yeast) protein is V-type proton ATPase subunit a (vph1).